Reading from the N-terminus, the 413-residue chain is Arginine biosynthesis bifunctional protein ArgJ (413 aa).

6 residues coordinate substrate: Thr158, Lys184, Thr195, Glu285, Asn408, and Ser413. Thr195 serves as the catalytic Nucleophile.

Belongs to the ArgJ family. In terms of assembly, heterotetramer of two alpha and two beta chains.

The protein localises to the cytoplasm. It carries out the reaction N(2)-acetyl-L-ornithine + L-glutamate = N-acetyl-L-glutamate + L-ornithine. The enzyme catalyses L-glutamate + acetyl-CoA = N-acetyl-L-glutamate + CoA + H(+). Its pathway is amino-acid biosynthesis; L-arginine biosynthesis; L-ornithine and N-acetyl-L-glutamate from L-glutamate and N(2)-acetyl-L-ornithine (cyclic): step 1/1. It functions in the pathway amino-acid biosynthesis; L-arginine biosynthesis; N(2)-acetyl-L-ornithine from L-glutamate: step 1/4. Functionally, catalyzes two activities which are involved in the cyclic version of arginine biosynthesis: the synthesis of N-acetylglutamate from glutamate and acetyl-CoA as the acetyl donor, and of ornithine by transacetylation between N(2)-acetylornithine and glutamate. In Agrobacterium fabrum (strain C58 / ATCC 33970) (Agrobacterium tumefaciens (strain C58)), this protein is Arginine biosynthesis bifunctional protein ArgJ.